Reading from the N-terminus, the 115-residue chain is Large ribosomal subunit protein bL19 (115 aa).

The protein belongs to the bacterial ribosomal protein bL19 family.

This protein is located at the 30S-50S ribosomal subunit interface and may play a role in the structure and function of the aminoacyl-tRNA binding site. In Lachnospira eligens (strain ATCC 27750 / DSM 3376 / VPI C15-48 / C15-B4) (Eubacterium eligens), this protein is Large ribosomal subunit protein bL19.